The chain runs to 63 residues: Large ribosomal subunit protein uL29 (63 aa).

The protein belongs to the universal ribosomal protein uL29 family.

The polypeptide is Large ribosomal subunit protein uL29 (Marinomonas sp. (strain MWYL1)).